The chain runs to 188 residues: MSIKSDKWIRRMAQEHGMIEPFVERQVRGEGANRVISFGVSSYGYDVRCADEFKVFTNINSATVDPKNFDEKSFVDIKSDVCIIPPNSFALARTVEYFRIPRNVLTICLGKSTYARCGIIVNVTPLEPEWEGHVTLEFSNTTTLPAKIYANEGVAQMLFLESDEECEVSYKDRGGKYQGQRGVTLPRT.

Residues 111–116 (KSTYAR), 135–137 (TLE), Gln156, Tyr170, and Gln180 contribute to the dCTP site. Glu137 functions as the Proton donor/acceptor in the catalytic mechanism.

The protein belongs to the dCTP deaminase family. In terms of assembly, homotrimer.

It carries out the reaction dCTP + H2O + H(+) = dUTP + NH4(+). Its pathway is pyrimidine metabolism; dUMP biosynthesis; dUMP from dCTP (dUTP route): step 1/2. Functionally, catalyzes the deamination of dCTP to dUTP. In Pseudomonas syringae pv. tomato (strain ATCC BAA-871 / DC3000), this protein is dCTP deaminase.